We begin with the raw amino-acid sequence, 382 residues long: D-galactonate dehydratase (382 aa).

A Mg(2+)-binding site is contributed by D183. H185 serves as the catalytic Proton donor. Residues E209 and E235 each contribute to the Mg(2+) site. H285 functions as the Proton acceptor in the catalytic mechanism. The interval N361–W382 is disordered.

The protein belongs to the mandelate racemase/muconate lactonizing enzyme family. GalD subfamily. Mg(2+) serves as cofactor.

The catalysed reaction is D-galactonate = 2-dehydro-3-deoxy-D-galactonate + H2O. Its pathway is carbohydrate acid metabolism; D-galactonate degradation; D-glyceraldehyde 3-phosphate and pyruvate from D-galactonate: step 1/3. Catalyzes the dehydration of D-galactonate to 2-keto-3-deoxy-D-galactonate. The chain is D-galactonate dehydratase from Xanthomonas euvesicatoria pv. vesicatoria (strain 85-10) (Xanthomonas campestris pv. vesicatoria).